The sequence spans 365 residues: DNA replication and repair protein RecF (365 aa).

30–37 lines the ATP pocket; that stretch reads GANGQGKT.

This sequence belongs to the RecF family.

Its subcellular location is the cytoplasm. Its function is as follows. The RecF protein is involved in DNA metabolism; it is required for DNA replication and normal SOS inducibility. RecF binds preferentially to single-stranded, linear DNA. It also seems to bind ATP. This Geobacter metallireducens (strain ATCC 53774 / DSM 7210 / GS-15) protein is DNA replication and repair protein RecF.